We begin with the raw amino-acid sequence, 269 residues long: 3-methyl-2-oxobutanoate hydroxymethyltransferase (269 aa).

Mg(2+) is bound by residues aspartate 52 and aspartate 91. Residues aspartate 52 to threonine 53, aspartate 91, and lysine 121 each bind 3-methyl-2-oxobutanoate. Glutamate 123 contributes to the Mg(2+) binding site. Residue glutamate 186 is the Proton acceptor of the active site.

This sequence belongs to the PanB family. Homodecamer; pentamer of dimers. Mg(2+) is required as a cofactor.

It localises to the cytoplasm. It carries out the reaction 3-methyl-2-oxobutanoate + (6R)-5,10-methylene-5,6,7,8-tetrahydrofolate + H2O = 2-dehydropantoate + (6S)-5,6,7,8-tetrahydrofolate. The protein operates within cofactor biosynthesis; (R)-pantothenate biosynthesis; (R)-pantoate from 3-methyl-2-oxobutanoate: step 1/2. Catalyzes the reversible reaction in which hydroxymethyl group from 5,10-methylenetetrahydrofolate is transferred onto alpha-ketoisovalerate to form ketopantoate. This is 3-methyl-2-oxobutanoate hydroxymethyltransferase from Rhodopirellula baltica (strain DSM 10527 / NCIMB 13988 / SH1).